We begin with the raw amino-acid sequence, 74 residues long: Sec-independent protein translocase protein TatA (74 aa).

A helical transmembrane segment spans residues 1-21; that stretch reads MGGISIWQLLIIVAIIVLLFG. The tract at residues 51–74 is disordered; the sequence is ANFDKVEAKESTSTTEKTKEKEQA.

This sequence belongs to the TatA/E family. In terms of assembly, the Tat system comprises two distinct complexes: a TatABC complex, containing multiple copies of TatA, TatB and TatC subunits, and a separate TatA complex, containing only TatA subunits. Substrates initially bind to the TatABC complex, which probably triggers association of the separate TatA complex to form the active translocon.

It localises to the cell inner membrane. Its function is as follows. Part of the twin-arginine translocation (Tat) system that transports large folded proteins containing a characteristic twin-arginine motif in their signal peptide across membranes. TatA could form the protein-conducting channel of the Tat system. The sequence is that of Sec-independent protein translocase protein TatA from Haemophilus ducreyi (strain 35000HP / ATCC 700724).